We begin with the raw amino-acid sequence, 274 residues long: Triosephosphate isomerase (274 aa).

13–15 (NWK) is a substrate binding site. H98 functions as the Electrophile in the catalytic mechanism. The active-site Proton acceptor is E170. The substrate site is built by G176 and S216.

It belongs to the triosephosphate isomerase family. In terms of assembly, homodimer.

The protein resides in the cytoplasm. It catalyses the reaction D-glyceraldehyde 3-phosphate = dihydroxyacetone phosphate. The protein operates within carbohydrate biosynthesis; gluconeogenesis. It functions in the pathway carbohydrate degradation; glycolysis; D-glyceraldehyde 3-phosphate from glycerone phosphate: step 1/1. In terms of biological role, involved in the gluconeogenesis. Catalyzes stereospecifically the conversion of dihydroxyacetone phosphate (DHAP) to D-glyceraldehyde-3-phosphate (G3P). This is Triosephosphate isomerase from Onion yellows phytoplasma (strain OY-M).